A 578-amino-acid chain; its full sequence is Membrane protein insertase YidC (578 aa).

Residues 7–27 traverse the membrane as a helical segment; that stretch reads FLAIAISLGILLGFQGLYRHF. The tract at residues 35-70 is disordered; the sequence is ARTATNAGQGKPNNTLGAVPTDATASQSPPPKEGAR. Residues 37–50 show a composition bias toward polar residues; it reads TATNAGQGKPNNTL. The next 4 helical transmembrane spans lie at 362–382, 436–456, 491–511, and 530–550; these read LVGNFGVAILIFTVLVKAAFY, LPMLLQFPIFFSLYKVIFVTI, HISPFLHLGIWPLIMGGTMYL, and FMPIIFTFMLARFPVGLVIYW.

The protein belongs to the OXA1/ALB3/YidC family. Type 1 subfamily. Interacts with the Sec translocase complex via SecD. Specifically interacts with transmembrane segments of nascent integral membrane proteins during membrane integration.

It is found in the cell inner membrane. Required for the insertion and/or proper folding and/or complex formation of integral membrane proteins into the membrane. Involved in integration of membrane proteins that insert both dependently and independently of the Sec translocase complex, as well as at least some lipoproteins. Aids folding of multispanning membrane proteins. The sequence is that of Membrane protein insertase YidC from Granulibacter bethesdensis (strain ATCC BAA-1260 / CGDNIH1).